Consider the following 153-residue polypeptide: Probable phospholipase A2 homolog 2 (153 aa).

Positions 1-25 are cleaved as a signal peptide; the sequence is MRFFLKLAPRCSVLLLLLLVTASRG. 6 disulfides stabilise this stretch: cysteine 42–cysteine 70, cysteine 46–cysteine 76, cysteine 51–cysteine 123, cysteine 63–cysteine 83, cysteine 82–cysteine 109, and cysteine 89–cysteine 102. Ca(2+) is bound by residues tyrosine 62, glycine 64, and tyrosine 67. The active site involves histidine 86. Aspartate 87 serves as a coordination point for Ca(2+).

The protein belongs to the phospholipase A2 family. Requires Ca(2+) as cofactor.

The protein resides in the secreted. The catalysed reaction is a 1,2-diacyl-sn-glycero-3-phosphocholine + H2O = a 1-acyl-sn-glycero-3-phosphocholine + a fatty acid + H(+). Functionally, PA2 catalyzes the calcium-dependent hydrolysis of the 2-acyl groups in 3-sn-phosphoglycerides. Releases lysophospholipids (LPLs) and free fatty acids (FFAs) from membrane phospholipids in response to hormones and other external stimuli. The polypeptide is Probable phospholipase A2 homolog 2 (PLA2-II) (Oryza sativa subsp. japonica (Rice)).